Consider the following 390-residue polypeptide: Substance-K receptor (390 aa).

At 1-32 the chain is on the extracellular side; the sequence is MGTRAIVSDANILSGLESNATGVTAFSMPGWQ. N-linked (GlcNAc...) asparagine glycosylation is present at N19. A helical transmembrane segment spans residues 33 to 56; sequence LALWATAYLALVLVAVTGNATVIW. Residues 57–69 lie on the Cytoplasmic side of the membrane; it reads IILAHERMRTVTN. A helical transmembrane segment spans residues 70–90; the sequence is YFIINLALADLCMAAFNATFN. At 91–107 the chain is on the extracellular side; it reads FIYASHNIWYFGRAFCY. Cysteines 106 and 181 form a disulfide. Residues 108–129 traverse the membrane as a helical segment; that stretch reads FQNLFPITAMFVSIYSMTAIAA. The Cytoplasmic portion of the chain corresponds to 130 to 149; it reads DRYMAIVHPFQPRLSAPSTK. Residues 150-170 form a helical membrane-spanning segment; the sequence is AIIAGIWLVALALASPQCFYS. Residues 171 to 196 lie on the Extracellular side of the membrane; the sequence is TITVDEGATKCVVAWPNDNGGKMLLL. The helical transmembrane segment at 197-218 threads the bilayer; it reads YHLVVFVLIYFLPLLVMFGAYS. The Cytoplasmic portion of the chain corresponds to 219 to 251; the sequence is VIGLTLWKRAVPRHQAHGANLRHLQAKKKFVKA. A helical transmembrane segment spans residues 252-272; that stretch reads MVLVVLTFAICWLPYHLYFIL. Over 273–290 the chain is Extracellular; that stretch reads GTFQEDIYYHKFIQQVYL. The chain crosses the membrane as a helical span at residues 291–310; the sequence is ALFWLAMSSTMYNPIIYCCL. Over 311–390 the chain is Cytoplasmic; sequence NHRFRSGFRL…PAGPICKAQA (80 aa). C324 carries the S-palmitoyl cysteine lipid modification. The segment at 365 to 390 is disordered; that stretch reads HSEATNGQVGSPQDGEPAGPICKAQA. Residues 366–375 are compositionally biased toward polar residues; it reads SEATNGQVGS.

It belongs to the G-protein coupled receptor 1 family.

The protein resides in the cell membrane. Its function is as follows. This is a receptor for the tachykinin neuropeptide substance K (neurokinin A). It is associated with G proteins that activate a phosphatidylinositol-calcium second messenger system. The rank order of affinity of this receptor to tachykinins is: substance K &gt; neuromedin-K &gt; substance P. This chain is Substance-K receptor (Tacr2), found in Rattus norvegicus (Rat).